The chain runs to 202 residues: Protein-methionine-sulfoxide reductase heme-binding subunit MsrQ (202 aa).

The next 6 helical transmembrane spans lie at 8–28 (YAWL…FLLW), 50–70 (LALI…WLGW), 76–96 (IRKA…GIYL), 114–134 (PFIT…LTSG), 148–168 (LLHR…WWGV), and 174–194 (GPLL…KTPA).

It belongs to the MsrQ family. Heterodimer of a catalytic subunit (MsrP) and a heme-binding subunit (MsrQ). FMN is required as a cofactor. It depends on heme b as a cofactor.

The protein resides in the cell membrane. Its function is as follows. Part of the MsrPQ system that repairs oxidized cell envelope proteins containing methionine sulfoxide residues (Met-O), using respiratory chain electrons. Thus protects these proteins from oxidative-stress damage caused by reactive species of oxygen and chlorine. MsrPQ is essential for the maintenance of envelope integrity under bleach stress, rescuing a wide series of structurally unrelated cell envelope proteins from methionine oxidation. MsrQ provides electrons for reduction to the reductase catalytic subunit MsrP, using the quinone pool of the respiratory chain. The protein is Protein-methionine-sulfoxide reductase heme-binding subunit MsrQ of Deinococcus radiodurans (strain ATCC 13939 / DSM 20539 / JCM 16871 / CCUG 27074 / LMG 4051 / NBRC 15346 / NCIMB 9279 / VKM B-1422 / R1).